A 373-amino-acid polypeptide reads, in one-letter code: L-threonine 3-dehydrogenase, mitochondrial (373 aa).

Residues glycine 62–leucine 67, aspartate 88–arginine 90, asparagine 106–isoleucine 107, tyrosine 195, lysine 199, and isoleucine 225 each bind NAD(+). Tyrosine 195 functions as the Proton donor/acceptor in the catalytic mechanism.

This sequence belongs to the NAD(P)-dependent epimerase/dehydratase family. Homodimer.

It localises to the mitochondrion. It carries out the reaction L-threonine + NAD(+) = (2S)-2-amino-3-oxobutanoate + NADH + H(+). It functions in the pathway amino-acid degradation; L-threonine degradation via oxydo-reductase pathway; glycine from L-threonine: step 1/2. Catalyzes the NAD(+)-dependent oxidation of L-threonine to 2-amino-3-ketobutyrate, mediating L-threonine catabolism. This chain is L-threonine 3-dehydrogenase, mitochondrial, found in Mus musculus (Mouse).